Here is a 323-residue protein sequence, read N- to C-terminus: Phosphate acetyltransferase (323 aa).

Belongs to the phosphate acetyltransferase and butyryltransferase family.

The protein resides in the cytoplasm. The enzyme catalyses acetyl-CoA + phosphate = acetyl phosphate + CoA. It functions in the pathway metabolic intermediate biosynthesis; acetyl-CoA biosynthesis; acetyl-CoA from acetate: step 2/2. In Bacillus subtilis (strain 168), this protein is Phosphate acetyltransferase (pta).